A 529-amino-acid polypeptide reads, in one-letter code: Bifunctional purine biosynthesis protein PurH (529 aa).

Residues 1–148 (MQQRRSVRRA…KNHKDVAIVV (148 aa)) enclose the MGS-like domain.

Belongs to the PurH family.

The enzyme catalyses (6R)-10-formyltetrahydrofolate + 5-amino-1-(5-phospho-beta-D-ribosyl)imidazole-4-carboxamide = 5-formamido-1-(5-phospho-D-ribosyl)imidazole-4-carboxamide + (6S)-5,6,7,8-tetrahydrofolate. It carries out the reaction IMP + H2O = 5-formamido-1-(5-phospho-D-ribosyl)imidazole-4-carboxamide. It participates in purine metabolism; IMP biosynthesis via de novo pathway; 5-formamido-1-(5-phospho-D-ribosyl)imidazole-4-carboxamide from 5-amino-1-(5-phospho-D-ribosyl)imidazole-4-carboxamide (10-formyl THF route): step 1/1. The protein operates within purine metabolism; IMP biosynthesis via de novo pathway; IMP from 5-formamido-1-(5-phospho-D-ribosyl)imidazole-4-carboxamide: step 1/1. The protein is Bifunctional purine biosynthesis protein PurH of Salmonella arizonae (strain ATCC BAA-731 / CDC346-86 / RSK2980).